Consider the following 334-residue polypeptide: Holliday junction branch migration complex subunit RuvB (334 aa).

Residues 4 to 184 (ADRLISAGVI…FGIVQRLEFY (181 aa)) are large ATPase domain (RuvB-L). ATP contacts are provided by residues I23, R24, G65, K68, T69, T70, 131 to 133 (EDY), R174, Y184, and R221. Residue T69 participates in Mg(2+) binding. The small ATPAse domain (RuvB-S) stretch occupies residues 185 to 255 (QVADLEHIVS…VAMKALDMLN (71 aa)). The tract at residues 258–334 (AEGFDFMDRK…YKHFGITREE (77 aa)) is head domain (RuvB-H). DNA contacts are provided by R294, R313, and R318.

The protein belongs to the RuvB family. As to quaternary structure, homohexamer. Forms an RuvA(8)-RuvB(12)-Holliday junction (HJ) complex. HJ DNA is sandwiched between 2 RuvA tetramers; dsDNA enters through RuvA and exits via RuvB. An RuvB hexamer assembles on each DNA strand where it exits the tetramer. Each RuvB hexamer is contacted by two RuvA subunits (via domain III) on 2 adjacent RuvB subunits; this complex drives branch migration. In the full resolvosome a probable DNA-RuvA(4)-RuvB(12)-RuvC(2) complex forms which resolves the HJ.

Its subcellular location is the cytoplasm. The catalysed reaction is ATP + H2O = ADP + phosphate + H(+). The RuvA-RuvB-RuvC complex processes Holliday junction (HJ) DNA during genetic recombination and DNA repair, while the RuvA-RuvB complex plays an important role in the rescue of blocked DNA replication forks via replication fork reversal (RFR). RuvA specifically binds to HJ cruciform DNA, conferring on it an open structure. The RuvB hexamer acts as an ATP-dependent pump, pulling dsDNA into and through the RuvAB complex. RuvB forms 2 homohexamers on either side of HJ DNA bound by 1 or 2 RuvA tetramers; 4 subunits per hexamer contact DNA at a time. Coordinated motions by a converter formed by DNA-disengaged RuvB subunits stimulates ATP hydrolysis and nucleotide exchange. Immobilization of the converter enables RuvB to convert the ATP-contained energy into a lever motion, pulling 2 nucleotides of DNA out of the RuvA tetramer per ATP hydrolyzed, thus driving DNA branch migration. The RuvB motors rotate together with the DNA substrate, which together with the progressing nucleotide cycle form the mechanistic basis for DNA recombination by continuous HJ branch migration. Branch migration allows RuvC to scan DNA until it finds its consensus sequence, where it cleaves and resolves cruciform DNA. The sequence is that of Holliday junction branch migration complex subunit RuvB from Yersinia enterocolitica serotype O:8 / biotype 1B (strain NCTC 13174 / 8081).